The primary structure comprises 248 residues: 2,3-bisphosphoglycerate-dependent phosphoglycerate mutase (248 aa).

Residues 7–14, 20–21, arginine 59, 86–89, lysine 97, 113–114, and 182–183 each bind substrate; these read RHGESIWN, TG, ERHY, RR, and GN. The Tele-phosphohistidine intermediate role is filled by histidine 8. Glutamate 86 serves as the catalytic Proton donor/acceptor.

This sequence belongs to the phosphoglycerate mutase family. BPG-dependent PGAM subfamily.

The enzyme catalyses (2R)-2-phosphoglycerate = (2R)-3-phosphoglycerate. The protein operates within carbohydrate degradation; glycolysis; pyruvate from D-glyceraldehyde 3-phosphate: step 3/5. Functionally, catalyzes the interconversion of 2-phosphoglycerate and 3-phosphoglycerate. The chain is 2,3-bisphosphoglycerate-dependent phosphoglycerate mutase from Methylacidiphilum infernorum (isolate V4) (Methylokorus infernorum (strain V4)).